The primary structure comprises 1979 residues: E3 ubiquitin-protein ligase TTC3 (1979 aa).

Positions 1-230 are interaction with POLG; sequence MDDFAEGGLS…RHSCMQCVKQ (230 aa). TPR repeat units lie at residues 231–264 and 266–298; these read GELM…RPEN and LLYG…KNTW. A Phosphoserine modification is found at serine 378. The tract at residues 422–457 is disordered; it reads CDCHPEFLPPPSQPPRHKGKQKSRNNESEKPSFNSE. TPR repeat units lie at residues 536–572 and 576–609; these read VLVV…YPNE and CLAY…ISRL. Residues 783-811 are disordered; that stretch reads LAQERMEEDLRESNPPKNEEPEETSDSAQ. Position 1009 is a phosphoserine (serine 1009). 7 disordered regions span residues 1021–1067, 1214–1289, 1402–1427, 1574–1601, 1757–1776, 1788–1821, and 1873–1927; these read NKGK…GPFA, QPDV…EEAK, QGSA…SSDS, KNDG…DEKT, MDSA…GSPT, KGAS…KKPS, and DEQK…PAPD. Over residues 1036–1050 the composition is skewed to low complexity; it reads VGSGAASVAPSSEAV. Serine 1060 is subject to Phosphoserine. Residues 1214 to 1227 are compositionally biased toward basic and acidic residues; it reads QPDVKSEALSEDVK. The segment covering 1248–1257 has biased composition (low complexity); it reads DSDSSSGSAS. The span at 1576–1586 shows a compositional bias: basic and acidic residues; the sequence is DGFDKECEPHP. Composition is skewed to polar residues over residues 1788–1799 and 1808–1821; these read KGASQVSPSEQS and GQAT…KKPS. Position 1794 is a phosphoserine (serine 1794). The segment covering 1873–1890 has biased composition (basic and acidic residues); sequence DEQKKKKPNPGKDKKTSE. The RING-type; atypical zinc finger occupies 1931-1971; that stretch reads CEICHEIFKSKNMRVLKCGHKFHKGCFKQWLKGQSTCPTCG.

In terms of assembly, interacts (when phosphorylated on Ser-378) with AKT1, AKT2 and AKT3 (when phosphorylated). Interacts with CIT. Interacts with POLG. Interacts with HSP70. Interacts with SMURF2. In terms of processing, phosphorylation on Ser-378 by Akt is required for ubiquitin ligase activity. Proteolytically cleaved into differently sized N- and C-terminal fragments.

It is found in the nucleus. The protein resides in the cytoplasm. Its subcellular location is the golgi apparatus. It carries out the reaction S-ubiquitinyl-[E2 ubiquitin-conjugating enzyme]-L-cysteine + [acceptor protein]-L-lysine = [E2 ubiquitin-conjugating enzyme]-L-cysteine + N(6)-ubiquitinyl-[acceptor protein]-L-lysine.. Its pathway is protein modification; protein ubiquitination. Its function is as follows. E3 ubiquitin-protein ligase which catalyzes the formation of 'Lys-48'-polyubiquitin chains. Mediates the ubiquitination and subsequent degradation of phosphorylated Akt (AKT1, AKT2 and AKT3) in the nucleus. Acts as a terminal regulator of Akt signaling after activation; its phosphorylation by Akt, which is a prerequisite for ubiquitin ligase activity, suggests the existence of a regulation mechanism required to control Akt levels after activation. Positively regulates TGFB1-induced epithelial-mesenchymal transition and myofibroblast differentiation by mediating the ubiquitination and subsequent degradation of SMURF2. Regulates neuronal differentiation by regulating actin remodeling and Golgi organization via a signaling cascade involving RHOA, CIT and ROCK. Inhibits cell proliferation. The polypeptide is E3 ubiquitin-protein ligase TTC3 (Ttc3) (Mus musculus (Mouse)).